Reading from the N-terminus, the 229-residue chain is RNA chaperone ProQ (229 aa).

The segment at 105–178 (EAKARVQAQR…PREEKHTPVS (74 aa)) is disordered. The span at 117–136 (QQAKKREAAAAAGDKESAPR) shows a compositional bias: basic and acidic residues. Basic residues predominate over residues 137–146 (RERKPRPAAP). Residues 147–176 (RRKEGAERKPRAEKPAAKAPRAPREEKHTP) are compositionally biased toward basic and acidic residues.

The protein belongs to the ProQ family.

It is found in the cytoplasm. RNA chaperone with significant RNA binding, RNA strand exchange and RNA duplexing activities. May regulate ProP activity through an RNA-based, post-transcriptional mechanism. The polypeptide is RNA chaperone ProQ (Escherichia fergusonii (strain ATCC 35469 / DSM 13698 / CCUG 18766 / IAM 14443 / JCM 21226 / LMG 7866 / NBRC 102419 / NCTC 12128 / CDC 0568-73)).